A 438-amino-acid chain; its full sequence is Transposon Ty2-C Gag polyprotein (438 aa).

Composition is skewed to polar residues over residues Met-1–Arg-11, Ala-19–Asn-39, and Lys-49–Thr-60. Disordered stretches follow at residues Met-1–His-88, Asn-365–His-397, and Ser-419–Ile-438. The RNA-binding stretch occupies residues Glu-295–His-397. Residues Thr-369–Asn-382 show a composition bias toward low complexity.

As to quaternary structure, homotrimer.

It is found in the cytoplasm. Capsid protein (CA) is the structural component of the virus-like particle (VLP), forming the shell that encapsulates the retrotransposons dimeric RNA genome. The particles are assembled from trimer-clustered units and there are holes in the capsid shells that allow for the diffusion of macromolecules. CA also has nucleocapsid-like chaperone activity, promoting primer tRNA(i)-Met annealing to the multipartite primer-binding site (PBS), dimerization of Ty2 RNA and initiation of reverse transcription. The sequence is that of Transposon Ty2-C Gag polyprotein (TY2A-C) from Saccharomyces cerevisiae (strain ATCC 204508 / S288c) (Baker's yeast).